The primary structure comprises 232 residues: Ribosomal RNA small subunit methyltransferase G (232 aa).

S-adenosyl-L-methionine contacts are provided by residues Gly93, Leu98, 144 to 145 (VE), and Arg163.

Belongs to the methyltransferase superfamily. RNA methyltransferase RsmG family.

The protein localises to the cytoplasm. It carries out the reaction guanosine(527) in 16S rRNA + S-adenosyl-L-methionine = N(7)-methylguanosine(527) in 16S rRNA + S-adenosyl-L-homocysteine. Specifically methylates the N7 position of guanine in position 527 of 16S rRNA. This Burkholderia pseudomallei (strain 1710b) protein is Ribosomal RNA small subunit methyltransferase G.